A 435-amino-acid chain; its full sequence is Elongation factor 1-alpha (435 aa).

Positions 4–229 (KPHLNLIVIG…DMLEIPPKPV (226 aa)) constitute a tr-type G domain. The tract at residues 13 to 20 (GHVDHGKS) is G1. Position 13-20 (13-20 (GHVDHGKS)) interacts with GTP. Residue Ser20 coordinates Mg(2+). A G2 region spans residues 69 to 73 (GVTIN). The interval 90–93 (DAPG) is G3. Residues 90-94 (DAPGH) and 152-155 (TKMD) contribute to the GTP site. The interval 152–155 (TKMD) is G4. Residues 193 to 195 (VSI) are G5.

Belongs to the TRAFAC class translation factor GTPase superfamily. Classic translation factor GTPase family. EF-Tu/EF-1A subfamily.

The protein localises to the cytoplasm. The enzyme catalyses GTP + H2O = GDP + phosphate + H(+). GTP hydrolase that promotes the GTP-dependent binding of aminoacyl-tRNA to the A-site of ribosomes during protein biosynthesis. The sequence is that of Elongation factor 1-alpha from Metallosphaera sedula (strain ATCC 51363 / DSM 5348 / JCM 9185 / NBRC 15509 / TH2).